Consider the following 365-residue polypeptide: Putative glutamate--cysteine ligase 2-3 (365 aa).

This sequence belongs to the glutamate--cysteine ligase type 2 family. YbdK subfamily.

The catalysed reaction is L-cysteine + L-glutamate + ATP = gamma-L-glutamyl-L-cysteine + ADP + phosphate + H(+). Its function is as follows. ATP-dependent carboxylate-amine ligase which exhibits weak glutamate--cysteine ligase activity. This Mycolicibacterium smegmatis (strain ATCC 700084 / mc(2)155) (Mycobacterium smegmatis) protein is Putative glutamate--cysteine ligase 2-3.